Here is a 142-residue protein sequence, read N- to C-terminus: Ribonuclease VapC31 (142 aa).

Positions 3–139 constitute a PINc domain; that stretch reads LLDANVLLAA…ARFASVRHIR (137 aa). Residues Asp5 and Asp108 each contribute to the Mg(2+) site.

This sequence belongs to the PINc/VapC protein family. The cofactor is Mg(2+).

Its function is as follows. Toxic component of a type II toxin-antitoxin (TA) system. An RNase. Its toxic effect is neutralized by coexpression with cognate antitoxin VapB31. The chain is Ribonuclease VapC31 from Mycobacterium tuberculosis (strain CDC 1551 / Oshkosh).